Consider the following 346-residue polypeptide: Angiopoietin-related protein 7 (346 aa).

The N-terminal stretch at Met1 to Leu26 is a signal peptide. Residues Gln39 to Thr119 adopt a coiled-coil conformation. Asn58 carries N-linked (GlcNAc...) asparagine glycosylation. A Fibrinogen C-terminal domain is found at Gln122–Asp343. The cysteines at positions 131 and 162 are disulfide-linked. N-linked (GlcNAc...) asparagine glycosylation is found at Asn253 and Asn267. Residues Cys285 and Cys298 are joined by a disulfide bond.

As to quaternary structure, homotetramer; disulfide-linked. Highly expressed in the cornea (at protein level). Expression is restricted to the stromal layer. Also detected at the junction between the corneal stromal layer and the conjuctiva. Not detected in the sclera.

It localises to the secreted. Functionally, has a role in the formation and organization of the extracellular matrix. In the eye, it functions as a mediator of dexamethasone-induced matrix deposition in the trabecular meshwork, the tissue responsible for the outflow of the ocular aqueous humor and for the maintenance of intraocular pressure. Is a negative regulator of angiogenesis in the cornea, and plays a major role in maintaining corneal avascularity and transparency. The polypeptide is Angiopoietin-related protein 7 (ANGPTL7) (Homo sapiens (Human)).